The sequence spans 499 residues: Neuronal acetylcholine receptor subunit alpha-7 (499 aa).

An N-terminal signal peptide occupies residues 1–19 (MRGSLCLALAASILHVSLQ). Residues 20–230 (GEFQRKLYKD…VSIRRRTLYY (211 aa)) are Extracellular-facing. R39 and V41 together coordinate Ca(2+). 3 N-linked (GlcNAc...) asparagine glycosylation sites follow: N43, N87, and N130. Cysteines 147 and 161 form a disulfide. Ca(2+) is bound by residues S169 and Y207. Residues C209 and C210 are joined by a disulfide bond. 3 consecutive transmembrane segments (helical) span residues 231 to 251 (GLNL…VFLL), 259 to 279 (ISLG…VAEI), and 292 to 312 (QYFA…VIVL). The interval 257–264 (EKISLGIT) is essential for TMEM35A/NACHO-mediated proper subunit assembly and trafficking to cell membrane. Residues 313–466 (QYHHHDPDGG…WKFAACVVDR (154 aa)) are Cytoplasmic-facing. A helical membrane pass occupies residues 467–487 (LCLMAFSVFTILCTIGILMSA).

Belongs to the ligand-gated ion channel (TC 1.A.9) family. Acetylcholine receptor (TC 1.A.9.1) subfamily. Alpha-7/CHRNA7 sub-subfamily. As to quaternary structure, homopentamer. Homooligomer of the short form gives rise to unfunctional channels, as does coexpression of both long and short forms of the receptor. Can also form heteropentamers with CHRNB2, mainly found in basal forebrain cholinergic neurons. Interacts with RIC3; which is required for proper folding and assembly. Interacts with LYPD6. Interacts with CANX. Glycosylations at Asn-43, Asn-87 and Asn-130 are essential for TMEM35A/NACHO-mediated proper subunit assembly and trafficking to the cell membrane. In terms of tissue distribution, at least in chromaffin cells.

The protein localises to the postsynaptic cell membrane. It localises to the cell membrane. It carries out the reaction Ca(2+)(in) = Ca(2+)(out). The catalysed reaction is K(+)(in) = K(+)(out). It catalyses the reaction Na(+)(in) = Na(+)(out). The enzyme catalyses choline(out) = choline(in). It carries out the reaction NH4(+)(in) = NH4(+)(out). The catalysed reaction is L-arginine(in) = L-arginine(out). It catalyses the reaction guanidine(out) = guanidine(in). With respect to regulation, activated by a myriad of ligands such as acetylcholine, cytisine, nicotine, choline and epibatidine. Oligomeric amyloid-beta protein 42 activates specifially CHRNA7:CHRNB2 nAchRs. Activity is modulated by positive allosteric modulators (PAMs), such as flavonoids, with a wide range of chemical diversity, pharmacological sensitivity and efficacy. AChR activity is inhibited by the antagonists alpha-conotoxons RgIA, ImI and ImII, small disulfide-constrained peptides from cone snails. Alpha-conotoxin PnIC selectively inhibits CHRNA7:CHRNB2 over CHRNA7 homopentamer. In terms of biological role, component of neuronal acetylcholine receptors (nAChRs) that function as pentameric, ligand-gated cation channels with high calcium permeability among other activities. nAChRs are excitatory neurotrasnmitter receptors formed by a collection of nAChR subunits known to mediate synaptic transmission in the nervous system and the neuromuscular junction. Each nAchR subunit confers differential attributes to channel properties, including activation, deactivation and desensitization kinetics, pH sensitivity, cation permeability, and binding to allosteric modulators. CHRNA7 forms homopentameric neuronal acetylcholine receptors abundantly expressed in the central nervous system, characterized by fast desensitization and high calcium permeability. Also forms heteropentamers with CHRNB2, mainly expressed in basal forebrain cholinergic neurons. Involved in the modulation of calcium-dependent signaling pathways and influences the release of neurotransmitters, including dopamine, glutamate and GABA. Also expressed in non-neuronal cells such as immune cells like lymphocytes, monocytes and macrophages. In T cells, activation induces metabotropic signaling that results in an increase of intracellular Ca2+ concentrations, independent of ionotropic receptor functions. In macrophages, required for acetylcholine-mediated inhibition of TNF and other inflammatory cytokine release. Once activated by acetylcholine, nicotine or other agonists, selectively inhibits production of pro-inflammatory cytokines while leaving anti-inflammatory cytokines undisturbed. Stimulates the cholinergic anti-inflammatory pathway, controlling inflammation by inhibiting NFKB nuclear translocation and activating the JAK2-STAT3 pathway, independently of ion channel activity. Also expressed in the urothelium where it modulates reflex bladder activity by increasing intracellular calcium through internal stores and decreasing basal ATP release. The sequence is that of Neuronal acetylcholine receptor subunit alpha-7 (CHRNA7) from Bos taurus (Bovine).